We begin with the raw amino-acid sequence, 824 residues long: Protein bicaudal D homolog 2 (824 aa).

At serine 2 the chain carries N-acetylserine. Residues 20-269 (EWLRAEVKRL…ELSHYMSIND (250 aa)) adopt a coiled-coil conformation. The interval 25-398 (EVKRLSHELA…RLTENLSALR (374 aa)) is interacts with DYNLL1, DYNC1H1, DYNC1I2, DCTN1 and DCTN2. Residues serine 190, serine 224, and serine 318 each carry the phosphoserine modification. Residues 311-330 (LPLDNKTSTPKKEGLAPPSP) form a disordered region. A Phosphothreonine modification is found at threonine 319. Residues 334-599 (SDLLSELNIS…LLAPEAGRAD (266 aa)) form an interaction with KIF5A region. Positions 338–537 (SELNISEIQK…VTFSEELANL (200 aa)) form a coiled coil. 2 positions are modified to phosphoserine: serine 343 and serine 395. Disordered regions lie at residues 398-425 (RRLQASKERQTALDNEKDRDSHEDGDYY), 559-622 (EGQG…DPRR), and 804-824 (EQTRRGRAKAAPKTKPATPSL). Basic and acidic residues predominate over residues 402 to 422 (ASKERQTALDNEKDRDSHEDG). A phosphoserine mark is found at serine 568, serine 574, and serine 582. The interval 590 to 824 (LLAPEAGRAD…PKTKPATPSL (235 aa)) is interaction with RANBP2. Position 602 is a phosphothreonine (threonine 602). Residues 604–618 (DSSPSPGSSLPSPLS) show a composition bias toward low complexity. Positions 666 to 808 (DKDKEALMEE…LELDHEQTRR (143 aa)) form a coiled coil. An interacts with RAB6A region spans residues 666-814 (DKDKEALMEE…QTRRGRAKAA (149 aa)). Threonine 821 carries the phosphothreonine modification. Serine 823 carries the post-translational modification Phosphoserine.

Belongs to the BicD family. As to quaternary structure, part of a tripartite complex with dynein and dynactin, acts an adapter linking the dynein motor complex and dynactin. Interacts with CPNE4 (via VWFA domain). Interacts with RAB6A. Interacts with NEK9. Interacts with DNAI1. Interacts with DYNC1H1. Interacts with RANBP2. Binds preferentially to tyrosinated microtubules than to detyrosinated microtubules. Interacts with DYNLL1, DYNC1I2; DCTN1, DCTN2 and KIF5A. Interacts with KIF1C. Post-translationally, phosphorylated by NEK9 in vitro. As to expression, ubiquitous.

The protein localises to the golgi apparatus. It localises to the cytoplasm. Its subcellular location is the cytoskeleton. It is found in the nucleus envelope. The protein resides in the nucleus. The protein localises to the nuclear pore complex. Functionally, acts as an adapter protein linking the dynein motor complex to various cargos and converts dynein from a non-processive to a highly processive motor in the presence of dynactin. Facilitates and stabilizes the interaction between dynein and dynactin and activates dynein processivity (the ability to move along a microtubule for a long distance without falling off the track). Facilitates the binding of RAB6A to the Golgi by stabilizing its GTP-bound form. Regulates coat complex coatomer protein I (COPI)-independent Golgi-endoplasmic reticulum transport via its interaction with RAB6A and recruitment of the dynein-dynactin motor complex. Contributes to nuclear and centrosomal positioning prior to mitotic entry through regulation of both dynein and kinesin-1. During G2 phase of the cell cycle, associates with RANBP2 at the nuclear pores and recruits dynein and dynactin to the nuclear envelope to ensure proper positioning of the nucleus relative to centrosomes prior to the onset of mitosis. In Homo sapiens (Human), this protein is Protein bicaudal D homolog 2.